A 69-amino-acid chain; its full sequence is Conotoxin Cal12.1p4 (69 aa).

Positions 1–23 (DLITNSYTRGKPRHVTSWRNLKT) are excised as a propeptide.

In terms of processing, contains 4 disulfide bonds. In terms of tissue distribution, expressed by the venom duct.

It localises to the secreted. The sequence is that of Conotoxin Cal12.1p4 from Californiconus californicus (California cone).